We begin with the raw amino-acid sequence, 183 residues long: Acireductone dioxygenase (183 aa).

Fe(2+) contacts are provided by His95, His97, Glu101, and His139. Positions 95, 97, 101, and 139 each coordinate Ni(2+).

Belongs to the acireductone dioxygenase (ARD) family. As to quaternary structure, monomer. The cofactor is Fe(2+). It depends on Ni(2+) as a cofactor.

It catalyses the reaction 1,2-dihydroxy-5-(methylsulfanyl)pent-1-en-3-one + O2 = 3-(methylsulfanyl)propanoate + CO + formate + 2 H(+). The catalysed reaction is 1,2-dihydroxy-5-(methylsulfanyl)pent-1-en-3-one + O2 = 4-methylsulfanyl-2-oxobutanoate + formate + 2 H(+). Its pathway is amino-acid biosynthesis; L-methionine biosynthesis via salvage pathway; L-methionine from S-methyl-5-thio-alpha-D-ribose 1-phosphate: step 5/6. In terms of biological role, catalyzes 2 different reactions between oxygen and the acireductone 1,2-dihydroxy-3-keto-5-methylthiopentene (DHK-MTPene) depending upon the metal bound in the active site. Fe-containing acireductone dioxygenase (Fe-ARD) produces formate and 2-keto-4-methylthiobutyrate (KMTB), the alpha-ketoacid precursor of methionine in the methionine recycle pathway. Ni-containing acireductone dioxygenase (Ni-ARD) produces methylthiopropionate, carbon monoxide and formate, and does not lie on the methionine recycle pathway. This is Acireductone dioxygenase from Aquifex aeolicus (strain VF5).